The sequence spans 109 residues: MFGKGGMGNLMKQAQQMQERMQKMQEQLAQMEVVGEAGAGMVKVTMAGSHSVRRIEIDPSLMEDDKEMLEDLVAAAVNDAVRRVEEQNKSKMGELTGGMQLPPGFKMPF.

Disordered stretches follow at residues 1–23 and 88–109; these read MFGK…RMQK and NKSK…KMPF. A compositionally biased stretch (low complexity) spans 11–23; the sequence is MKQAQQMQERMQK.

The protein belongs to the YbaB/EbfC family. As to quaternary structure, homodimer.

It is found in the cytoplasm. It localises to the nucleoid. In terms of biological role, binds to DNA and alters its conformation. May be involved in regulation of gene expression, nucleoid organization and DNA protection. The sequence is that of Nucleoid-associated protein AHA_2212 from Aeromonas hydrophila subsp. hydrophila (strain ATCC 7966 / DSM 30187 / BCRC 13018 / CCUG 14551 / JCM 1027 / KCTC 2358 / NCIMB 9240 / NCTC 8049).